A 226-amino-acid chain; its full sequence is Large ribosomal subunit protein uL1 (226 aa).

This sequence belongs to the universal ribosomal protein uL1 family. Part of the 50S ribosomal subunit.

In terms of biological role, binds directly to 23S rRNA. The L1 stalk is quite mobile in the ribosome, and is involved in E site tRNA release. Its function is as follows. Protein L1 is also a translational repressor protein, it controls the translation of the L11 operon by binding to its mRNA. The sequence is that of Large ribosomal subunit protein uL1 from Treponema denticola (strain ATCC 35405 / DSM 14222 / CIP 103919 / JCM 8153 / KCTC 15104).